We begin with the raw amino-acid sequence, 956 residues long: Bifunctional glutamine synthetase adenylyltransferase/adenylyl-removing enzyme (956 aa).

The segment at 1-450 (MENMSEQALP…YFKETVGGQE (450 aa)) is adenylyl removase. An adenylyl transferase region spans residues 456–956 (EQWTAQLWSL…IYEQVLNNGQ (501 aa)).

The protein belongs to the GlnE family. Mg(2+) serves as cofactor.

It carries out the reaction [glutamine synthetase]-O(4)-(5'-adenylyl)-L-tyrosine + phosphate = [glutamine synthetase]-L-tyrosine + ADP. It catalyses the reaction [glutamine synthetase]-L-tyrosine + ATP = [glutamine synthetase]-O(4)-(5'-adenylyl)-L-tyrosine + diphosphate. Functionally, involved in the regulation of glutamine synthetase GlnA, a key enzyme in the process to assimilate ammonia. When cellular nitrogen levels are high, the C-terminal adenylyl transferase (AT) inactivates GlnA by covalent transfer of an adenylyl group from ATP to specific tyrosine residue of GlnA, thus reducing its activity. Conversely, when nitrogen levels are low, the N-terminal adenylyl removase (AR) activates GlnA by removing the adenylyl group by phosphorolysis, increasing its activity. The regulatory region of GlnE binds the signal transduction protein PII (GlnB) which indicates the nitrogen status of the cell. This Shewanella loihica (strain ATCC BAA-1088 / PV-4) protein is Bifunctional glutamine synthetase adenylyltransferase/adenylyl-removing enzyme.